Reading from the N-terminus, the 812-residue chain is Eukaryotic translation initiation factor 3 subunit C (812 aa).

The segment at 1–105 is disordered; it reads MSRFFSRGYH…SDESDDEGKK (105 aa). Acidic residues-rich tracts occupy residues 17-40 and 48-59; these read SEDE…EVVS and SESESAESDDDS. Positions 607–783 constitute a PCI domain; that stretch reads FHQHINLDLI…EMLIFDKGDE (177 aa).

It belongs to the eIF-3 subunit C family. As to quaternary structure, component of the eukaryotic translation initiation factor 3 (eIF-3) complex.

The protein resides in the cytoplasm. Functionally, component of the eukaryotic translation initiation factor 3 (eIF-3) complex, which is involved in protein synthesis of a specialized repertoire of mRNAs and, together with other initiation factors, stimulates binding of mRNA and methionyl-tRNAi to the 40S ribosome. The eIF-3 complex specifically targets and initiates translation of a subset of mRNAs involved in cell proliferation. This Eremothecium gossypii (strain ATCC 10895 / CBS 109.51 / FGSC 9923 / NRRL Y-1056) (Yeast) protein is Eukaryotic translation initiation factor 3 subunit C.